The chain runs to 146 residues: Hemoglobin subunit beta (146 aa).

The Globin domain maps to 2–146 (HWTAEEKQLI…VAHALARKYH (145 aa)). Residues His-63 and His-92 each contribute to the heme b site.

The protein belongs to the globin family. As to quaternary structure, heterotetramer of two alpha chains and two beta chains. In terms of tissue distribution, red blood cells.

Involved in oxygen transport from the lung to the various peripheral tissues. This chain is Hemoglobin subunit beta (HBB), found in Aegypius monachus (Cinereous vulture).